The primary structure comprises 392 residues: Antitrypsin (392 aa).

A signal peptide spans 1–16 (MKTIICLFTIAIAAMA).

It belongs to the serpin family. Hemolymph.

The protein resides in the secreted. May play a role in the prophenoloxidase activating system in the silkworm hemolymph. The chain is Antitrypsin from Bombyx mori (Silk moth).